A 407-amino-acid chain; its full sequence is Putative aspartate aminotransferase, cytoplasmic 2 (407 aa).

An N6-(pyridoxal phosphate)lysine modification is found at K249.

The protein belongs to the class-I pyridoxal-phosphate-dependent aminotransferase family. Homodimer. The cofactor is pyridoxal 5'-phosphate.

Its subcellular location is the cytoplasm. It catalyses the reaction L-aspartate + 2-oxoglutarate = oxaloacetate + L-glutamate. The protein is Putative aspartate aminotransferase, cytoplasmic 2 (GOT1L1) of Bos taurus (Bovine).